Reading from the N-terminus, the 362-residue chain is S-adenosylmethionine:tRNA ribosyltransferase-isomerase (362 aa).

Belongs to the QueA family. As to quaternary structure, monomer.

Its subcellular location is the cytoplasm. The enzyme catalyses 7-aminomethyl-7-carbaguanosine(34) in tRNA + S-adenosyl-L-methionine = epoxyqueuosine(34) in tRNA + adenine + L-methionine + 2 H(+). It participates in tRNA modification; tRNA-queuosine biosynthesis. Transfers and isomerizes the ribose moiety from AdoMet to the 7-aminomethyl group of 7-deazaguanine (preQ1-tRNA) to give epoxyqueuosine (oQ-tRNA). This Syntrophus aciditrophicus (strain SB) protein is S-adenosylmethionine:tRNA ribosyltransferase-isomerase.